The primary structure comprises 414 residues: Isocitrate dehydrogenase [NADP] cytoplasmic (414 aa).

Ser2 is subject to N-acetylserine. Tyr42 is modified (phosphotyrosine). NADP(+) is bound at residue 75-77 (TIT). Residue Thr77 coordinates substrate. Lys81 bears the N6-acetyllysine mark. Arg82 is an NADP(+) binding site. Substrate contacts are provided by residues 94 to 100 (SPNGTIR) and Arg109. Lys126 is subject to N6-succinyllysine. Positions 132 and 212 each coordinate substrate. Residues Lys224, Lys233, and Lys243 each carry the N6-acetyllysine modification. Asp252 provides a ligand contact to Mn(2+). Lys260 serves as a coordination point for NADP(+). Mn(2+)-binding residues include Asp275 and Asp279. 310–315 (GTVTRH) lines the NADP(+) pocket. Lys321 bears the N6-acetyllysine mark. Asn328 contacts NADP(+). A Phosphoserine modification is found at Ser389. Lys400 carries the post-translational modification N6-succinyllysine.

The protein belongs to the isocitrate and isopropylmalate dehydrogenases family. As to quaternary structure, homodimer. It depends on Mg(2+) as a cofactor. The cofactor is Mn(2+). Post-translationally, acetylation at Lys-374 dramatically reduces catalytic activity.

Its subcellular location is the cytoplasm. The protein localises to the cytosol. It carries out the reaction D-threo-isocitrate + NADP(+) = 2-oxoglutarate + CO2 + NADPH. Functionally, catalyzes the NADP(+)-dependent oxidative decarboxylation of isocitrate (D-threo-isocitrate) to 2-ketoglutarate (2-oxoglutarate), which is required by other enzymes such as the phytanoyl-CoA dioxygenase. Plays a critical role in the generation of NADPH, an important cofactor in many biosynthesis pathways. May act as a corneal epithelial crystallin and may be involved in maintaining corneal epithelial transparency. In Microtus mexicanus (Mexican vole), this protein is Isocitrate dehydrogenase [NADP] cytoplasmic (IDH1).